The primary structure comprises 401 residues: Tyrosine--tRNA ligase (401 aa).

Residues proline 41–histidine 50 carry the 'HIGH' region motif. Residues lysine 225 to serine 229 carry the 'KMSKS' region motif. An ATP-binding site is contributed by lysine 228. Residues lysine 334 to glycine 395 form the S4 RNA-binding domain.

It belongs to the class-I aminoacyl-tRNA synthetase family. TyrS type 2 subfamily. As to quaternary structure, homodimer.

It is found in the cytoplasm. The catalysed reaction is tRNA(Tyr) + L-tyrosine + ATP = L-tyrosyl-tRNA(Tyr) + AMP + diphosphate + H(+). In terms of biological role, catalyzes the attachment of tyrosine to tRNA(Tyr) in a two-step reaction: tyrosine is first activated by ATP to form Tyr-AMP and then transferred to the acceptor end of tRNA(Tyr). The protein is Tyrosine--tRNA ligase of Thermotoga maritima (strain ATCC 43589 / DSM 3109 / JCM 10099 / NBRC 100826 / MSB8).